The sequence spans 399 residues: Elongation factor Tu (399 aa).

The 195-residue stretch at 10 to 204 folds into the tr-type G domain; sequence KPHVNIGTIG…AVDASIPEPE (195 aa). The tract at residues 19 to 26 is G1; the sequence is GHVDHGKT. Position 19-26 (19-26) interacts with GTP; the sequence is GHVDHGKT. T26 contacts Mg(2+). The segment at 60–64 is G2; it reads GITIN. The segment at 81-84 is G3; it reads DCPG. GTP is bound by residues 81–85 and 136–139; these read DCPGH and NKCD. The interval 136 to 139 is G4; it reads NKCD. The G5 stretch occupies residues 174 to 176; it reads SGL.

Belongs to the TRAFAC class translation factor GTPase superfamily. Classic translation factor GTPase family. EF-Tu/EF-1A subfamily. As to quaternary structure, monomer.

The protein localises to the cytoplasm. It catalyses the reaction GTP + H2O = GDP + phosphate + H(+). GTP hydrolase that promotes the GTP-dependent binding of aminoacyl-tRNA to the A-site of ribosomes during protein biosynthesis. This is Elongation factor Tu from Prochlorococcus marinus (strain AS9601).